Consider the following 172-residue polypeptide: RNA silencing suppressor p19 (172 aa).

Residues 1 to 20 (MERAIQGNDAREQANSERWD) show a composition bias toward basic and acidic residues. Residues 1–37 (MERAIQGNDAREQANSERWDGGSGGTTSPFKLPDESP) are disordered.

This sequence belongs to the tombusvirus protein p19 family. As to quaternary structure, homodimer.

In terms of biological role, viral suppressor of RNA silencing which binds specifically to silencing RNAs (siRNAs). Acts as a molecular caliper to specifically select siRNAs based on the length of the duplex region of the RNA. The protein is RNA silencing suppressor p19 of Tomato bushy stunt virus (strain Ja6) (TBSV).